The following is a 394-amino-acid chain: NAD(P)H-quinone oxidoreductase subunit H (394 aa).

The protein belongs to the complex I 49 kDa subunit family. As to quaternary structure, NDH-1 can be composed of about 15 different subunits; different subcomplexes with different compositions have been identified which probably have different functions.

It localises to the cellular thylakoid membrane. The catalysed reaction is a plastoquinone + NADH + (n+1) H(+)(in) = a plastoquinol + NAD(+) + n H(+)(out). It carries out the reaction a plastoquinone + NADPH + (n+1) H(+)(in) = a plastoquinol + NADP(+) + n H(+)(out). Its function is as follows. NDH-1 shuttles electrons from an unknown electron donor, via FMN and iron-sulfur (Fe-S) centers, to quinones in the respiratory and/or the photosynthetic chain. The immediate electron acceptor for the enzyme in this species is believed to be plastoquinone. Couples the redox reaction to proton translocation, and thus conserves the redox energy in a proton gradient. Cyanobacterial NDH-1 also plays a role in inorganic carbon-concentration. This Prochlorococcus marinus (strain MIT 9303) protein is NAD(P)H-quinone oxidoreductase subunit H.